Here is a 340-residue protein sequence, read N- to C-terminus: Melanin-concentrating hormone receptor 2 (340 aa).

Residues 1 to 39 (MNPFHASCWNTSAELLNKSWNKEFAYQTASVVDTVILPS) are Extracellular-facing. 2 N-linked (GlcNAc...) asparagine glycosylation sites follow: N10 and N17. The chain crosses the membrane as a helical span at residues 40–60 (MIGIICSTGLVGNILIVFTII). Topologically, residues 61–69 (RSRKKTVPD) are cytoplasmic. Residues 70 to 90 (IYICNLAVADLVHIVGMPFLI) traverse the membrane as a helical segment. At 91 to 104 (HQWARGGEWVFGGP) the chain is on the extracellular side. Residues 105–129 (LCTIITSLDTCNQFACSAIMTVMSV) traverse the membrane as a helical segment. Residues 130-154 (DRYFALVQPFRLTRWRTRYKTIRIN) lie on the Cytoplasmic side of the membrane. Residues 155 to 175 (LGLWAASFILALPVWVYSKVI) traverse the membrane as a helical segment. Topologically, residues 176-200 (KFKDGVESCAFDLTSPDDVLWYTLY) are extracellular. The chain crosses the membrane as a helical span at residues 201–221 (LTITTFFFPLPLILVCYILIL). At 222-252 (CYTWEMYQQNKDARCCNPSVPKQRVMKLTKM) the chain is on the cytoplasmic side. Residues 253-273 (VLVLVVVFILSAAPYHVIQLV) traverse the membrane as a helical segment. Residues 274–288 (NLQMEQPTLAFYVGY) are Extracellular-facing. Residues 289–309 (YLSICLSYASSSINPFLYILL) form a helical membrane-spanning segment. Residues 310–340 (SGNFQKRLPQIQRRATEKEINNMGNTLKSHF) lie on the Cytoplasmic side of the membrane.

It belongs to the G-protein coupled receptor 1 family. Specifically expressed in the brain, with highest levels in cerebral cortex, hippocampus and amygdala. No expression detected in the cerebellum, thalamus or hypothalamus.

It is found in the cell membrane. Its function is as follows. Receptor for melanin-concentrating hormone, coupled to G proteins that activate phosphoinositide hydrolysis. The polypeptide is Melanin-concentrating hormone receptor 2 (MCHR2) (Homo sapiens (Human)).